The chain runs to 492 residues: Trehalose-phosphatase (492 aa).

The segment at 1–55 (MTETVTDQGKQRSSKLQKNEAAKDEQVEGKGKETLESGTDKSAEQNSSLLVGQPD) is disordered. Basic and acidic residues predominate over residues 17-43 (QKNEAAKDEQVEGKGKETLESGTDKSA). The Mg(2+) site is built by aspartate 213 and aspartate 215. Aspartate 215 serves as the catalytic Proton donor/acceptor. 332–334 (QRK) contributes to the substrate binding site. Aspartate 424 provides a ligand contact to Mg(2+).

This sequence belongs to the gob-1 trehalose phosphatase family. The cofactor is Mg(2+).

The enzyme catalyses alpha,alpha-trehalose 6-phosphate + H2O = alpha,alpha-trehalose + phosphate. Its activity is regulated as follows. Inhibited by trehalose 6-sulfate. Its function is as follows. Catalyzes the hydrolysis of trehalose 6-phosphate to trehalose and phosphate; prevents the accumulation of toxic levels of trehalose 6-phosphate. The protein is Trehalose-phosphatase of Brugia malayi (Filarial nematode worm).